The sequence spans 389 residues: 1-deoxy-D-xylulose 5-phosphate reductoisomerase (389 aa).

Residues Ser-11, Gly-12, Ser-13, Val-14, Asn-39, and Asn-122 each contribute to the NADPH site. A 1-deoxy-D-xylulose 5-phosphate-binding site is contributed by Lys-123. Glu-124 contacts NADPH. Asp-148 provides a ligand contact to Mn(2+). 1-deoxy-D-xylulose 5-phosphate contacts are provided by Ser-149, Glu-150, Ser-174, and His-197. Residue Glu-150 participates in Mn(2+) binding. Gly-203 is a binding site for NADPH. 1-deoxy-D-xylulose 5-phosphate is bound by residues Ser-210, Asn-215, Lys-216, and Glu-219. Mn(2+) is bound at residue Glu-219.

Belongs to the DXR family. The cofactor is Mg(2+). Mn(2+) serves as cofactor.

It carries out the reaction 2-C-methyl-D-erythritol 4-phosphate + NADP(+) = 1-deoxy-D-xylulose 5-phosphate + NADPH + H(+). It functions in the pathway isoprenoid biosynthesis; isopentenyl diphosphate biosynthesis via DXP pathway; isopentenyl diphosphate from 1-deoxy-D-xylulose 5-phosphate: step 1/6. Functionally, catalyzes the NADPH-dependent rearrangement and reduction of 1-deoxy-D-xylulose-5-phosphate (DXP) to 2-C-methyl-D-erythritol 4-phosphate (MEP). This is 1-deoxy-D-xylulose 5-phosphate reductoisomerase from Leptospira interrogans serogroup Icterohaemorrhagiae serovar copenhageni (strain Fiocruz L1-130).